We begin with the raw amino-acid sequence, 260 residues long: Putative [LysW]-aminoadipate/[LysW]-glutamate kinase (260 aa).

Substrate contacts are provided by residues 35-36, Arg62, and Asn162; that span reads GG.

Belongs to the acetylglutamate kinase family. LysZ subfamily.

The protein resides in the cytoplasm. It catalyses the reaction [amino-group carrier protein]-C-terminal-N-(1,4-dicarboxybutan-1-yl)-L-glutamine + ATP = [amino-group carrier protein]-C-terminal-N-(1-carboxy-5-phosphooxy-5-oxopentan-1-yl)-L-glutamine + ADP. The catalysed reaction is [amino-group carrier protein]-C-terminal-gamma-(L-glutamyl)-L-glutamate + ATP = [amino-group carrier protein]-C-terminal-gamma-(5-phospho-L-glutamyl)-L-glutamate + ADP. It participates in amino-acid biosynthesis; L-lysine biosynthesis via AAA pathway; L-lysine from L-alpha-aminoadipate (Thermus route): step 2/5. The protein operates within amino-acid biosynthesis; L-arginine biosynthesis. In terms of biological role, involved in both the arginine and lysine biosynthetic pathways. Phosphorylates the LysW-bound precursors glutamate (for arginine biosynthesis), respectively alpha-aminoadipate (for lysine biosynthesis). In Pyrobaculum neutrophilum (strain DSM 2338 / JCM 9278 / NBRC 100436 / V24Sta) (Thermoproteus neutrophilus), this protein is Putative [LysW]-aminoadipate/[LysW]-glutamate kinase.